The sequence spans 67 residues: ATP synthase F(0) complex subunit 8 (67 aa).

The helical transmembrane segment at 8–24 (TWFITILSMLITLFILF) threads the bilayer. Lysine 54 carries the N6-acetyllysine; alternate modification. Position 54 is an N6-succinyllysine; alternate (lysine 54). Lysine 57 carries the N6-acetyllysine modification.

This sequence belongs to the ATPase protein 8 family. In terms of assembly, component of the ATP synthase complex composed at least of ATP5F1A/subunit alpha, ATP5F1B/subunit beta, ATP5MC1/subunit c (homooctomer), MT-ATP6/subunit a, MT-ATP8/subunit 8, ATP5ME/subunit e, ATP5MF/subunit f, ATP5MG/subunit g, ATP5MK/subunit k, ATP5MJ/subunit j, ATP5F1C/subunit gamma, ATP5F1D/subunit delta, ATP5F1E/subunit epsilon, ATP5PF/subunit F6, ATP5PB/subunit b, ATP5PD/subunit d, ATP5PO/subunit OSCP. ATP synthase complex consists of a soluble F(1) head domain (subunits alpha(3) and beta(3)) - the catalytic core - and a membrane F(0) domain - the membrane proton channel (subunits c, a, 8, e, f, g, k and j). These two domains are linked by a central stalk (subunits gamma, delta, and epsilon) rotating inside the F1 region and a stationary peripheral stalk (subunits F6, b, d, and OSCP). Interacts with PRICKLE3.

It localises to the mitochondrion membrane. Functionally, subunit 8, of the mitochondrial membrane ATP synthase complex (F(1)F(0) ATP synthase or Complex V) that produces ATP from ADP in the presence of a proton gradient across the membrane which is generated by electron transport complexes of the respiratory chain. ATP synthase complex consist of a soluble F(1) head domain - the catalytic core - and a membrane F(1) domain - the membrane proton channel. These two domains are linked by a central stalk rotating inside the F(1) region and a stationary peripheral stalk. During catalysis, ATP synthesis in the catalytic domain of F(1) is coupled via a rotary mechanism of the central stalk subunits to proton translocation. In vivo, can only synthesize ATP although its ATP hydrolase activity can be activated artificially in vitro. Part of the complex F(0) domain. In Dugong dugon (Dugong), this protein is ATP synthase F(0) complex subunit 8.